We begin with the raw amino-acid sequence, 101 residues long: uncharacterized protein (101 aa).

The chain crosses the membrane as a helical span at residues 70–90 (VLFIPIILLLPPSCPLTGVTV).

The protein resides in the membrane. This is an uncharacterized protein from Saccharomyces cerevisiae (strain ATCC 204508 / S288c) (Baker's yeast).